The following is a 52-amino-acid chain: Large ribosomal subunit protein bL32c (52 aa).

Belongs to the bacterial ribosomal protein bL32 family.

It is found in the plastid. Its subcellular location is the chloroplast. In Arabis hirsuta (Hairy rock-cress), this protein is Large ribosomal subunit protein bL32c.